A 221-amino-acid polypeptide reads, in one-letter code: 7-cyano-7-deazaguanine synthase (221 aa).

ATP is bound at residue 10-20 (LSGGLDSTTCM). Zn(2+)-binding residues include Cys188, Cys196, Cys199, and Cys202.

This sequence belongs to the QueC family. Homodimer. Zn(2+) serves as cofactor.

It carries out the reaction 7-carboxy-7-deazaguanine + NH4(+) + ATP = 7-cyano-7-deazaguanine + ADP + phosphate + H2O + H(+). Its pathway is purine metabolism; 7-cyano-7-deazaguanine biosynthesis. Its function is as follows. Catalyzes the ATP-dependent conversion of 7-carboxy-7-deazaguanine (CDG) to 7-cyano-7-deazaguanine (preQ(0)). The chain is 7-cyano-7-deazaguanine synthase from Oceanobacillus iheyensis (strain DSM 14371 / CIP 107618 / JCM 11309 / KCTC 3954 / HTE831).